A 278-amino-acid chain; its full sequence is Orotidine 5'-phosphate decarboxylase (278 aa).

Residue Lys95 is the Proton donor of the active site.

This sequence belongs to the OMP decarboxylase family. Type 2 subfamily.

It carries out the reaction orotidine 5'-phosphate + H(+) = UMP + CO2. It functions in the pathway pyrimidine metabolism; UMP biosynthesis via de novo pathway; UMP from orotate: step 2/2. The protein is Orotidine 5'-phosphate decarboxylase of Corynebacterium glutamicum (strain R).